A 314-amino-acid chain; its full sequence is UPF0761 membrane protein VIBHAR_00593 (314 aa).

The next 6 helical transmembrane spans lie at 41–61, 104–124, 143–163, 185–205, 217–237, and 249–269; these read YLAY…LSIL, MTAV…SNID, FSMY…SIAV, FLRW…YFLV, IGAA…AFYI, and ALAA…IVLI.

It belongs to the UPF0761 family.

The protein resides in the cell inner membrane. This is UPF0761 membrane protein VIBHAR_00593 from Vibrio campbellii (strain ATCC BAA-1116).